Here is a 551-residue protein sequence, read N- to C-terminus: Intestinal-type alkaline phosphatase 2 (551 aa).

The N-terminal stretch at 1-19 (MQGAWVLLLLGFRLQLSLS) is a signal peptide. Aspartate 61 is a Mg(2+) binding site. The Zn(2+) site is built by aspartate 61 and serine 111. The active-site Phosphoserine intermediate is the serine 111. A disulfide bridge links cysteine 140 with cysteine 202. Asparagine 141 carries an N-linked (GlcNAc...) asparagine glycan. Position 174 (serine 174) interacts with Mg(2+). Position 235 (glutamate 235) interacts with Ca(2+). Residue asparagine 241 is glycosylated (N-linked (GlcNAc...) asparagine). Ca(2+) is bound by residues phenylalanine 288, glutamate 289, and aspartate 304. Glutamate 330 is a binding site for Mg(2+). 4 residues coordinate Zn(2+): aspartate 335, histidine 339, aspartate 376, and histidine 377. Asparagine 426 carries an N-linked (GlcNAc...) asparagine glycan. Cysteine 485 and cysteine 492 are disulfide-bonded. The tract at residues 496-537 (PPADENRPTTPVQNSTTTTTTTTTTTTTTTTTRVQNSASSLG) is disordered. Asparagine 509 is a glycosylation site (N-linked (GlcNAc...) asparagine). The segment covering 511 to 527 (TTTTTTTTTTTTTTTTT) has biased composition (low complexity). Residues 528 to 537 (RVQNSASSLG) show a composition bias toward polar residues. Asparagine 531 carries GPI-anchor amidated asparagine lipidation. A propeptide spans 532-551 (SASSLGPATAPLAWHYWPRR) (removed in mature form).

The protein belongs to the alkaline phosphatase family. In terms of assembly, homodimer. Mg(2+) serves as cofactor. The cofactor is Zn(2+). Requires Ca(2+) as cofactor.

Its subcellular location is the cell membrane. It carries out the reaction a phosphate monoester + H2O = an alcohol + phosphate. Its function is as follows. Alkaline phosphatase that can hydrolyze various phosphate compounds. The chain is Intestinal-type alkaline phosphatase 2 from Rattus norvegicus (Rat).